The sequence spans 1375 residues: MAKNEVLSLPVDSLKLSQTALDRLKLSGISRLEDFNTFNLKELQMLLSDSFNEVLPTLIYYKLPRDVRDLSLSDEVVSVLETAGIKDLEALTKYDKSTLYHVFKDDEFLLKEINDLFELYHEEKLSTLNVATEVFEEVALPQEVSVEDRVNKIIQPIRKTYGSKAFTHFKVRLASPDEIRNWSYGEVINHETINYRTSKPEPGGLFDERIFGPTRDYQCACGKKQTVNKGQICPKCGIEITESKVRRERMGHINLEAPVVHTWYLKNSPSRLAILLGIKAKQLEEVVYHASYIVTDPGQNTPLAKKQILSEQDYSLLVEEYGSRFTALTGAEAVKKLLQDLDLDKEVKNLRKRLKTSSKQKRDRIIKRLDVVEAFNQSDNKPEWMVMDVIPVIPPDLRPMVPLDGGRFATTDLNDLYRRILNRNNRLKKQKEQMAPRLITKNEKRMLQEAVDALFDNAKRGKKAAVERNRHLKSLSDLLRGKQGRFRQNLLGKRVDYSGRSVIIVGPDLEMYQCGIPREMAITLFKPFILRELQLTHGAEKKNANAKYERRDDDTWRALEKVVREHPVLLNRAPTLHRLGIQAFEVKLIDGKAIRLHPLVTPAFNADFDGDQMAVHLPLSPEAQAEARLLMLASNNILNPRDGKPVVTPSQDMVLGNYYLTIEESKDRNFGDDLERTKKHQEKHRHEGKFFSSIDEVKIAYENKDISLHTRIIIKPESVKDTFTVEQKNMYLVTTLGKIIFNEILPETFPYVNEPTMSNLSEKTPDIYFIKKGVNPKDALKHIPTPEPFKKRFLSMVIAQVFKLFHISETSRMLDKLKDLGFKYSTVAGITISYADINVYSKKKEMVEATEEEINEIEEWFEDGLLTDSERRKLVIDKWTNVKNEIQSGIMKEFDKDNNIFMMSDSGARGNVSNFTQLVGMRGLMSNPKGETIEVPVQSSFREGLTVSEFFISTHGARKGSTDTALKTAESGYLTRRLVDVSQDVIIVEDDCGSSHGVYVEAIKDESGKEIVPLYDRIYGRFAAHDIISPKTGEVFVKRNELITEEIGLAIVKSGMQKVEIRSIMTCTSSHGICAKDYGINLATNQFVEVGEAIGVVAAQSIGEPGTQLTMRTFHTGGVAAGADITQGLPRIQELFEARNPKGKATISEVEGKVKDISRRGGSISITITDTQGTEYKYTLDPNIEALVKKGQDVVAGQKLSSGSINPKELLRVTDVKTASNYILEEVQKVYRAQGVEISDKHVEVIIRQMLRRIMVIIEGDTNILPGTEVSIDEFKRENKEVLKNRGRLAVGRPILLGITRASLRSDSFLSAASFQETTRILTDAAIRSKKDELHGLKENVIIGGLIPAGTGILQEKFFHYDQPEDKKPIYDDFE.

The segment at 1–158 (MAKNEVLSLP…RVNKIIQPIR (158 aa)) is unknown. Residues 159-1353 (KTYGSKAFTH…GGLIPAGTGI (1195 aa)) form a DNA-directed RNA polymerase subunit beta' region. C219, C221, C233, and C236 together coordinate Zn(2+). Positions 607, 609, and 611 each coordinate Mg(2+).

The protein belongs to the RNA polymerase beta' chain family. In terms of assembly, the RNAP catalytic core consists of 2 alpha, 1 beta, 1 beta' and 1 omega subunit. When a sigma factor is associated with the core the holoenzyme is formed, which can initiate transcription. It depends on Mg(2+) as a cofactor. The cofactor is Zn(2+).

The catalysed reaction is RNA(n) + a ribonucleoside 5'-triphosphate = RNA(n+1) + diphosphate. Functionally, DNA-dependent RNA polymerase catalyzes the transcription of DNA into RNA using the four ribonucleoside triphosphates as substrates. This Acholeplasma laidlawii (strain PG-8A) protein is DNA-directed RNA polymerase subunit beta'.